Here is a 158-residue protein sequence, read N- to C-terminus: MQGRLSAWLVKHELVHRSLGFDYQGIEILQIKPEDWDSIAVISYVYGYNYLRSQCAYDVAPGGFLASVYHLTRIQYGVDQPEEVCIKVFAPRRNPKIPSVFWIWRSADFQERESYDMLGISYENHPRLKRILMPESWIGWPLRKDYIAPNFYEIQDAH.

This sequence belongs to the complex I 30 kDa subunit family. NDH is composed of at least 16 different subunits, 5 of which are encoded in the nucleus.

It localises to the plastid. The protein resides in the chloroplast thylakoid membrane. It catalyses the reaction a plastoquinone + NADH + (n+1) H(+)(in) = a plastoquinol + NAD(+) + n H(+)(out). The catalysed reaction is a plastoquinone + NADPH + (n+1) H(+)(in) = a plastoquinol + NADP(+) + n H(+)(out). In terms of biological role, NDH shuttles electrons from NAD(P)H:plastoquinone, via FMN and iron-sulfur (Fe-S) centers, to quinones in the photosynthetic chain and possibly in a chloroplast respiratory chain. The immediate electron acceptor for the enzyme in this species is believed to be plastoquinone. Couples the redox reaction to proton translocation, and thus conserves the redox energy in a proton gradient. In Acorus calamus var. americanus (American sweet flag), this protein is NAD(P)H-quinone oxidoreductase subunit J, chloroplastic.